A 913-amino-acid chain; its full sequence is Calcium-activated chloride channel regulator 1 (913 aa).

The signal sequence occupies residues 1-21 (MESLKSPVFLLILHLLEGVLS). Residues 46–199 (DEALIQHIKD…AITGKNQVRR (154 aa)) are metalloprotease domain. Residue histidine 156 participates in Zn(2+) binding. The active site involves glutamate 157. Positions 160 and 167 each coordinate Zn(2+). Positions 307–476 (IVCLVLDKSG…NGLVDAFAAL (170 aa)) constitute a VWFA domain. Residues asparagine 504, asparagine 770, asparagine 804, asparagine 810, asparagine 836, and asparagine 887 are each glycosylated (N-linked (GlcNAc...) asparagine).

It belongs to the CLCR family. In terms of processing, the 110 kDa translation product is autoproteolytically cleaved by the metalloprotease domain in the endoplasmic reticulum into a 75 kDa N-terminal and a 35 kDa C-terminal products that remain physically associated with each other. The cleavage is necessary for calcium-activated chloride channel (CaCC) activation activity. Glycosylated. In terms of tissue distribution, exclusively expressed in the digestive and respiratory tracts and in the uterus (at protein level). Expressed in small intestine, colon, stomach, and uterus and slightly expressed in trachea tissue. Exclusively expressed in the mucin granule membranes of gastrointestinal, respiratory, and uterine goblet cells and other mucin-producing cells. In the colon, expressed in the surface mucous cells. In the stomach highly expressed in the surface epithelium in the pylorus. Strongly expressed in the airway epithelium of lung tissues associated with airway hyperresponsiveness (AHR).

Its subcellular location is the secreted. The protein localises to the extracellular space. In terms of biological role, may be involved in mediating calcium-activated chloride conductance. May play critical roles in goblet cell metaplasia, mucus hypersecretion, cystic fibrosis and AHR. May be involved in the regulation of mucus production and/or secretion by goblet cells. Involved in the regulation of tissue inflammation in the innate immune response. May play a role as a tumor suppressor. Induces MUC5AC. In Mus musculus (Mouse), this protein is Calcium-activated chloride channel regulator 1 (Clca1).